The primary structure comprises 623 residues: MELRDKVGQLPFSPGVYLYKDSGGKVIYVGKAKSLRNRVRSYFSEDKLGDIKTGTLITEACDIDYILVDNEKEALALENNLIKQYKPRFNILLRDDKTYPYVKVTNEKYPRVYVTRRLRKDGAQYFGPFFPANLAHRLVHFIHRHFQVPSCKVDLTRFHPKPCLQFHIHRCLGPCVQGLTTDEAYAAAVRDVRLFLDGRHSDLARGLRARMEAASLEMRFEEAAGLRDLITTVEEIEERQKMAAAKGDDVDIFAVYAEPPLVALNIFHLRNGQIVDRRELFWEDQFEYDESLFLSSLLKQIYLDQQFVPAEIHVPVEFEDLEALEELLTEKRQRRVEIRTPQRGQKKALLGLVETNAKHSFDARFRVLKPSSRAIQEALQDALNLPDAPSRIECFDISHIQGTDKVASMVVWEDGKMKKSDYRKFIIRTVVGNDDFASMREVVTRRYSRLQEEKQPMPGLVLIDGGLGQLHAAAEALEAIGIADQPLASIAKREEIIYVFGQEDEPVVLDRFSPILHLVQSIRDEAHRFAVTFHRSLRNTRQLTSELDAIRGVGAKTVQKLLKEFGSLERVRAATETQLATVVGRAAAKRVIAHYTTVEAAPEPVASVAQSEDAAPDVPDPQA.

Residues 12–91 (FSPGVYLYKD…IKQYKPRFNI (80 aa)) enclose the GIY-YIG domain. A UVR domain is found at 201–236 (SDLARGLRARMEAASLEMRFEEAAGLRDLITTVEEI). The disordered stretch occupies residues 604–623 (PVASVAQSEDAAPDVPDPQA).

It belongs to the UvrC family. As to quaternary structure, interacts with UvrB in an incision complex.

It localises to the cytoplasm. In terms of biological role, the UvrABC repair system catalyzes the recognition and processing of DNA lesions. UvrC both incises the 5' and 3' sides of the lesion. The N-terminal half is responsible for the 3' incision and the C-terminal half is responsible for the 5' incision. This chain is UvrABC system protein C, found in Solibacter usitatus (strain Ellin6076).